A 258-amino-acid polypeptide reads, in one-letter code: Trifolitoxin-processing protein TfxF (258 aa).

In terms of biological role, the actions of the proteins TfxB, TfxD and TfxF are implicated in the processing of the inactive trifolitoxin (TfxA) precursor into the active peptide. The protein is Trifolitoxin-processing protein TfxF (tfxF) of Rhizobium leguminosarum bv. trifolii.